The chain runs to 298 residues: Inosose dehydratase (298 aa).

This sequence belongs to the IolE/MocC family. It depends on glutathione as a cofactor. Co(2+) serves as cofactor. Mn(2+) is required as a cofactor.

The catalysed reaction is scyllo-inosose = 3D-3,5/4-trihydroxycyclohexane-1,2-dione + H2O. The protein operates within polyol metabolism; myo-inositol degradation into acetyl-CoA; acetyl-CoA from myo-inositol: step 2/7. In terms of biological role, catalyzes the dehydration of inosose (2-keto-myo-inositol, 2KMI or 2,4,6/3,5-pentahydroxycyclohexanone) to 3D-(3,5/4)-trihydroxycyclohexane-1,2-dione (D-2,3-diketo-4-deoxy-epi-inositol). This is Inosose dehydratase from Clostridium botulinum (strain Alaska E43 / Type E3).